The following is a 335-amino-acid chain: Serine protease 42 (335 aa).

The N-terminal stretch at 1-24 (MASGGGSLGLIVFLLLLQPKPCEA) is a signal peptide. A glycan (N-linked (GlcNAc...) asparagine) is linked at Asn67. The region spanning 79 to 315 (IMGGVDAEEG…YSKWLIAVVN (237 aa)) is the Peptidase S1 domain. A disulfide bridge connects residues Cys104 and Cys120. His119 functions as the Charge relay system in the catalytic mechanism. N-linked (GlcNAc...) asparagine glycosylation is present at Asn140. Asp165 functions as the Charge relay system in the catalytic mechanism. Asn176 carries an N-linked (GlcNAc...) asparagine glycan. Disulfide bonds link Cys199–Cys273, Cys232–Cys253, and Cys263–Cys291. Ser267 (charge relay system) is an active-site residue.

The protein belongs to the peptidase S1 family. In terms of tissue distribution, testis-specific. Mainly detected in round spermatids at all the eminiferous epithelial stages (at protein level).

It is found in the cytoplasm. It localises to the cell membrane. Plays a role in spermatogenesis. Involved in germ cell survival during meiosis. Lacks protease activity in vitro. The sequence is that of Serine protease 42 from Mus musculus (Mouse).